A 785-amino-acid chain; its full sequence is Solute carrier family 45 member 4 (785 aa).

The segment at 1–43 (MKMAPQNADSESMQVQELPVPLPDPQKPRDPEAETQEETTSEG) is disordered. 6 consecutive transmembrane segments (helical) span residues 64-84 (EFCYAMETALVTPILLQIGLP), 87-107 (YYSLTWFLSPVLGLIFTPLIG), 124-144 (ILALCVGVLIGVALFLNGSAI), 156-176 (PIGIVLTVLGVVVLDFSADAT), 197-217 (LNIHAFSAGLGGAIGYVLGGL), and 234-254 (VLFFFAAVIFSVSVALHLFSI). Disordered stretches follow at residues 259 to 309 (YSPQ…VQSE) and 401 to 430 (KVPNGRGSPPINSLSRSKVDLKPSVTSGSM). Residues serine 442 and serine 472 each carry the phosphoserine modification. The tract at residues 478 to 505 (DLQQRQRSRHRNQSGATASSGDTESEEG) is disordered. Residues 490–499 (QSGATASSGD) show a composition bias toward low complexity. Serine 502 carries the post-translational modification Phosphoserine. The next 6 membrane-spanning stretches (helical) occupy residues 525–545 (LMWLCLCHLLTWFSVIAEAVF), 577–597 (MGCWGLVIYAATGAICSALLQ), 609–629 (IIYMLGTLGFSVGTAVMAMFP), 631–651 (VYVAMVTISTMGVVSMSISYC), 683–703 (ILSCQVYISQILVASALGGVV), and 709–729 (IVVIPIVASVGSFLGFLTATF). The segment at 741–772 (KEEQKGLSSGPAGEGEGGAGSEKPTVLKLSRK) is disordered. A Phosphoserine modification is found at serine 749.

The protein belongs to the glycoside-pentoside-hexuronide (GPH) cation symporter transporter (TC 2.A.2) family. Ubiquitously expressed.

The protein localises to the membrane. It carries out the reaction sucrose(out) + H(+)(out) = sucrose(in) + H(+)(in). In terms of biological role, proton-associated sucrose transporter. May be able to transport also glucose and fructose. This Mus musculus (Mouse) protein is Solute carrier family 45 member 4 (Slc45a4).